A 349-amino-acid polypeptide reads, in one-letter code: Divinyl chlorophyll a/b light-harvesting protein PcbE (349 aa).

6 helical membrane passes run 27–47, 65–85, 88–108, 201–221, 241–261, and 308–328; these read FIAAHIAHTGLIAFAAGGSTL, IFLAHLASIGIGFDEAGAWTG, VASIAIVHLVLSMVYGAGGLL, VLGGHAFLAFLEITGGAFHIA, AILSFSCAGLGWMAVVAAFWC, and LANVHYYFGFFFLQGHLWHAL.

Belongs to the PsbB/PsbC family. IsiA/Pcb subfamily. In terms of assembly, the antenna complex consists of divinyl chlorophylls (a and b) and divinyl chlorophyll a/b binding proteins and binds more divinyl chlorophyll b than does the antenna complex from high-light-adapted Prochlorococcus. It depends on divinyl chlorophyll a as a cofactor. Requires divinyl chlorophyll b as cofactor.

It is found in the cellular thylakoid membrane. In terms of biological role, the antenna complex functions as a light receptor, it captures and delivers excitation energy to photosystems II and I. The Prochlorales pcb genes are not related to higher plant LHCs. This chain is Divinyl chlorophyll a/b light-harvesting protein PcbE (pcbE), found in Prochlorococcus marinus (strain NATL2A).